Consider the following 495-residue polypeptide: Acetyl-coenzyme A carboxylase carboxyl transferase subunit beta, chloroplastic (495 aa).

The segment at 188–208 is disordered; that stretch reads SRNSSENEGSSRRTRTKGSDL. A CoA carboxyltransferase N-terminal domain is found at 226-495; the sequence is LWVQCENCYG…PLNQKSSKIK (270 aa). Residues Cys-230, Cys-233, Cys-249, and Cys-252 each contribute to the Zn(2+) site. The C4-type zinc-finger motif lies at 230–252; sequence CENCYGLNYKKFFKSKMNICEQC.

The protein belongs to the AccD/PCCB family. As to quaternary structure, acetyl-CoA carboxylase is a heterohexamer composed of biotin carboxyl carrier protein, biotin carboxylase and 2 subunits each of ACCase subunit alpha and ACCase plastid-coded subunit beta (accD). The cofactor is Zn(2+).

It is found in the plastid. It localises to the chloroplast stroma. It catalyses the reaction N(6)-carboxybiotinyl-L-lysyl-[protein] + acetyl-CoA = N(6)-biotinyl-L-lysyl-[protein] + malonyl-CoA. It participates in lipid metabolism; malonyl-CoA biosynthesis; malonyl-CoA from acetyl-CoA: step 1/1. Its function is as follows. Component of the acetyl coenzyme A carboxylase (ACC) complex. Biotin carboxylase (BC) catalyzes the carboxylation of biotin on its carrier protein (BCCP) and then the CO(2) group is transferred by the transcarboxylase to acetyl-CoA to form malonyl-CoA. This chain is Acetyl-coenzyme A carboxylase carboxyl transferase subunit beta, chloroplastic, found in Nicotiana tomentosiformis (Tobacco).